The sequence spans 62 residues: Large ribosomal subunit protein bL33 (62 aa).

Belongs to the bacterial ribosomal protein bL33 family.

In Phocaeicola vulgatus (strain ATCC 8482 / DSM 1447 / JCM 5826 / CCUG 4940 / NBRC 14291 / NCTC 11154) (Bacteroides vulgatus), this protein is Large ribosomal subunit protein bL33.